Here is a 646-residue protein sequence, read N- to C-terminus: MESPTQTSEHIESMTEFLVKHYPDQLREISLSSDPKLHYPLFIEYAELVDDNPSLARQVFSDPEHYLRQFDDSAILAHKIALEHMKKFEEKIGIEKRFIHVRINTSGSPLERSPETFPSIGRVRVKHRGILMMLKGTVIRSGAVKMYEGEKMYRCRKCKHMFPIFPELESINSIVKPPFCPSQRSKACEGTNFDPVDDTVTRHDYQEIKIQENTQVLGVGVIPRSILVVLKDDLVDNVKAGDDVVVSGILTSKWSHDLKDVRCDLEPMLIANHVRRTNELKSEIDISDDLIEKFKNFWSHFRDTPLKGRNAILRGICPQVFGLFTVKLAVALTLIGGVQHVDASGTKVRGESHLLLIGDPGTGKSQFLKFAAKLSNRAVITTGLGSTSAGLTVTAVKDGGEWMLEAGALVLADGGLCCIDEFDSMREHDRATIHEAMEQQSISVAKAGLVTTLSTKTIVFGATNPKGQYDPDQSLSVNTALSGPLLSRFDIVLVLLDTKNPEWDAVVSSHILAEVQIEQDREVDDLTTIWPLPMLQRYIQFVKKNFRPVLSKEAEEIISSYYRLQRRSSTHNAARTTVRMLESLIRLAQAHARLMFRNEVTRLDAITAILCIESSMTISAIVDSMGNALHSNFSEEPDQECILFRH.

Residues 155–188 form a C4-type zinc finger; the sequence is CRKCKHMFPIFPELESINSIVKPPFCPSQRSKAC. Residues 308–511 form the MCM domain; the sequence is GRNAILRGIC…EWDAVVSSHI (204 aa). Position 358 to 365 (358 to 365) interacts with ATP; sequence GDPGTGKS. The Arginine finger motif lies at 487–490; that stretch reads SRFD.

This sequence belongs to the MCM family.

The protein resides in the nucleus. The enzyme catalyses ATP + H2O = ADP + phosphate + H(+). Probable DNA helicase that may play a role in DNA repair during meiosis. This is Probable DNA helicase MCM9 (MCM9) from Arabidopsis thaliana (Mouse-ear cress).